We begin with the raw amino-acid sequence, 466 residues long: FAD-dependent monooxygenase dpfgE (466 aa).

A signal peptide spans 1-23 (MSQKPFRVIIVGGSVTGLTLAHS). Residues glutamate 35, glycine 49, and arginine 108 each contribute to the FAD site. Residues asparagine 128 and asparagine 192 are each glycosylated (N-linked (GlcNAc...) asparagine). FAD is bound by residues aspartate 312 and alanine 325. Asparagine 376 carries an N-linked (GlcNAc...) asparagine glycan. The helical transmembrane segment at 443–465 (GVVRNVFFLLAATVIVAWVCRLW) threads the bilayer.

Belongs to the paxM FAD-dependent monooxygenase family. The cofactor is FAD.

It localises to the membrane. It participates in secondary metabolite biosynthesis; terpenoid biosynthesis. Functionally, FAD-dependent monooxygenase; part of the gene cluster that mediates the biosynthesis of diterpenoid pyrones. The first step of the pathway is the synthesis of the alpha-pyrone moiety by the polyketide synthase dpfgA via condensation of one acetyl-CoA starter unit with 3 malonyl-CoA units and 2 methylations. The alpha-pyrone is then combined with geranylgeranyl pyrophosphate (GGPP) formed by the GGPP synthase dpfgD through the action of the prenyltransferase dpfgC to yield a linear alpha-pyrone diterpenoid. Subsequent steps in the diterpenoid pyrone biosynthetic pathway involve the decalin core formation, which is initiated by the epoxidation of the C10-C11 olefin by the FAD-dependent oxidoreductase dpfgE, and is followed by a cyclization cascade catalyzed by the terpene cyclase dpfgB. The short chain dehydrogenase/reductase dpfgG then oxidizes the 8S hydroxy group to a ketone and the short chain dehydrogenase/reductase dpfgH reduces the ketone to the 8R hydroxy group to yield higginsianin B. Higginsianin B is further methylated by the methyltransferase dpfgI to produce the intermediate named FDDP B. The cytochrome P450 monooxygenase dfgpJ then catalyzes a three-step oxidation at C-27 to generate a carboxylic acid as well as C-26 hydroxylation. Finally, methyltransferase dpfgK methylates the carboxylic acid generated by dpfgJ, yielding the final diterpenoid pyrones from the pathway which were named FDDP D and FDDP E. The chain is FAD-dependent monooxygenase dpfgE from Gibberella zeae (strain ATCC MYA-4620 / CBS 123657 / FGSC 9075 / NRRL 31084 / PH-1) (Wheat head blight fungus).